Reading from the N-terminus, the 599-residue chain is Ecdysone oxidase (599 aa).

FAD contacts are provided by residues 137–140 (NDMV) and 537–538 (WH). H538 serves as the catalytic Proton acceptor.

It belongs to the GMC oxidoreductase family. The cofactor is FAD.

It catalyses the reaction ecdysone + O2 = 3-dehydroecdysone + H2O2. Its function is as follows. Involved in the inactivation of ecdysteroid molting hormones by converting ecdysteroids into 3-dehydroecdysteroids. The chain is Ecdysone oxidase from Spodoptera littoralis (Egyptian cotton leafworm).